A 253-amino-acid polypeptide reads, in one-letter code: 5-oxoprolinase subunit A (253 aa).

Belongs to the LamB/PxpA family. In terms of assembly, forms a complex composed of PxpA, PxpB and PxpC.

The enzyme catalyses 5-oxo-L-proline + ATP + 2 H2O = L-glutamate + ADP + phosphate + H(+). Functionally, catalyzes the cleavage of 5-oxoproline to form L-glutamate coupled to the hydrolysis of ATP to ADP and inorganic phosphate. The sequence is that of 5-oxoprolinase subunit A from Azorhizobium caulinodans (strain ATCC 43989 / DSM 5975 / JCM 20966 / LMG 6465 / NBRC 14845 / NCIMB 13405 / ORS 571).